A 133-amino-acid chain; its full sequence is Large ribosomal subunit protein bL20 (133 aa).

It belongs to the bacterial ribosomal protein bL20 family.

In terms of biological role, binds directly to 23S ribosomal RNA and is necessary for the in vitro assembly process of the 50S ribosomal subunit. It is not involved in the protein synthesizing functions of that subunit. This Bartonella quintana (strain Toulouse) (Rochalimaea quintana) protein is Large ribosomal subunit protein bL20.